The following is a 241-amino-acid chain: Phosphatidylcholine synthase (241 aa).

Residues 1 to 15 (MKIFNYKRVPYAEIR) are Cytoplasmic-facing. A helical transmembrane segment spans residues 16–36 (AFSVHILTASGSFLAFLGVVA). At 37–41 (ASEHR) the chain is on the periplasmic side. The helical transmembrane segment at 42–62 (FVDMFWWLGLALLVDGIDGPI) threads the bilayer. Residues 63–76 (ARKVRVKEVLPNWS) lie on the Cytoplasmic side of the membrane. The helical transmembrane segment at 77 to 97 (GDTLDNIIDYVTYVLLPAFAL) threads the bilayer. Over 98-100 (YQS) the chain is Periplasmic. The helical transmembrane segment at 101–121 (GMIGEPLSFVAAGMIVVSSAI) threads the bilayer. The Cytoplasmic portion of the chain corresponds to 122–133 (YYADMGMKTDEY). A helical membrane pass occupies residues 134–154 (FFSGFPVVWNMVVFTLFVMDA). At 155-159 (SATTA) the chain is on the periplasmic side. Residues 160–180 (MTVVTVSVFLTFLPINFLHPV) form a helical membrane-spanning segment. Topologically, residues 181 to 187 (RVKRLRP) are cytoplasmic. Residues 188–208 (LNLLVVAIWCALGGYALLMHF) form a helical membrane-spanning segment. Residues 209-214 (ETPTWA) are Periplasmic-facing. A helical membrane pass occupies residues 215–235 (VIAFVASGIYLYCIGGILQFF). Over 236–241 (PSLGAK) the chain is Cytoplasmic.

The protein belongs to the CDP-alcohol phosphatidyltransferase class-I family. Requires Mn(2+) as cofactor.

The protein resides in the cell inner membrane. It catalyses the reaction a CDP-1,2-diacyl-sn-glycerol + choline = a 1,2-diacyl-sn-glycero-3-phosphocholine + CMP + H(+). Its function is as follows. Condenses choline with CDP-diglyceride to produce phosphatidylcholine and CMP. Affects motility, biofilm formation and virulence of this bacterium when there is a complete loss of phosphatidylcholine formation due to absence of both the synthase (pcs) and the methylation (pmtA) pathways. This Agrobacterium fabrum (strain C58 / ATCC 33970) (Agrobacterium tumefaciens (strain C58)) protein is Phosphatidylcholine synthase.